Here is a 316-residue protein sequence, read N- to C-terminus: tRNA-splicing endonuclease subunit Sen34 (316 aa).

Residues Gln120 to Leu184 are disordered. Composition is skewed to polar residues over residues Glu144–Ala159 and Leu168–Val181. Active-site residues include Tyr253, His261, and Lys292.

It belongs to the tRNA-intron endonuclease family. TRNA splicing endonuclease is a heterotetramer composed of TSEN2, TSEN15, TSEN34/LENG5 and TSEN54. tRNA splicing endonuclease complex also contains proteins of the pre-mRNA 3'-end processing machinery such as CLP1, CPSF1, CPSF4 and CSTF2.

It is found in the nucleus. The protein localises to the nucleolus. It carries out the reaction pretRNA = a 3'-half-tRNA molecule with a 5'-OH end + a 5'-half-tRNA molecule with a 2',3'-cyclic phosphate end + an intron with a 2',3'-cyclic phosphate and a 5'-hydroxyl terminus.. Functionally, constitutes one of the two catalytic subunit of the tRNA-splicing endonuclease complex, a complex responsible for identification and cleavage of the splice sites in pre-tRNA. It cleaves pre-tRNA at the 5'- and 3'-splice sites to release the intron. The products are an intron and two tRNA half-molecules bearing 2',3'-cyclic phosphate and 5'-OH termini. There are no conserved sequences at the splice sites, but the intron is invariably located at the same site in the gene, placing the splice sites an invariant distance from the constant structural features of the tRNA body. The tRNA splicing endonuclease is also involved in mRNA processing via its association with pre-mRNA 3'-end processing factors, establishing a link between pre-tRNA splicing and pre-mRNA 3'-end formation, suggesting that the endonuclease subunits function in multiple RNA-processing events. The protein is tRNA-splicing endonuclease subunit Sen34 (Tsen34) of Mus musculus (Mouse).